Reading from the N-terminus, the 469-residue chain is uncharacterized protein (469 aa).

A coiled-coil region spans residues 11-65 (LFISVAFSQESVEDLKRLLEEYKKKIQEIERRLEELEKAKKEEEKKKEAVALKPT).

This is an uncharacterized protein from Aquifex aeolicus (strain VF5).